The chain runs to 313 residues: 3'-5' exoribonuclease YhaM (313 aa).

Residues 163–279 (HVVSMLRLAK…LHQIDLMDAS (117 aa)) enclose the HD domain.

This sequence belongs to the YhaM family.

Shows a 3'-5' exoribonuclease activity. The sequence is that of 3'-5' exoribonuclease YhaM from Listeria welshimeri serovar 6b (strain ATCC 35897 / DSM 20650 / CCUG 15529 / CIP 8149 / NCTC 11857 / SLCC 5334 / V8).